We begin with the raw amino-acid sequence, 650 residues long: Acetyl-coenzyme A synthetase (650 aa).

CoA-binding positions include 191-194, T311, and N335; that span reads RGGR. ATP-binding positions include 387-389, 411-416, D500, and R515; these read GEP and DTWWQT. S523 provides a ligand contact to CoA. An ATP-binding site is contributed by R526. Mg(2+)-binding residues include V537, H539, and V542. Position 584 (R584) interacts with CoA. K609 is modified (N6-acetyllysine).

It belongs to the ATP-dependent AMP-binding enzyme family. The cofactor is Mg(2+). In terms of processing, acetylated. Deacetylation by the SIR2-homolog deacetylase activates the enzyme.

The enzyme catalyses acetate + ATP + CoA = acetyl-CoA + AMP + diphosphate. Catalyzes the conversion of acetate into acetyl-CoA (AcCoA), an essential intermediate at the junction of anabolic and catabolic pathways. AcsA undergoes a two-step reaction. In the first half reaction, AcsA combines acetate with ATP to form acetyl-adenylate (AcAMP) intermediate. In the second half reaction, it can then transfer the acetyl group from AcAMP to the sulfhydryl group of CoA, forming the product AcCoA. The polypeptide is Acetyl-coenzyme A synthetase (Shewanella baltica (strain OS155 / ATCC BAA-1091)).